Consider the following 586-residue polypeptide: Protein CBFA2T2 (586 aa).

A disordered region spans residues 1-95; that stretch reads MVGIPGPYQF…SSSSSLANQQ (95 aa). Polar residues predominate over residues 56-68; the sequence is SSHSNGINHSPPT. Residues 77–90 are compositionally biased toward low complexity; it reads QRSSNGPSSSSSSS. The 96-residue stretch at 102–197 folds into the TAFH domain; the sequence is VRQLSKLKRF…TPSQYLAQHE (96 aa). Disordered stretches follow at residues 204 to 242 and 387 to 417; these read STSS…AEPP and IRKG…FGSR. Residues 228-237 are compositionally biased toward basic and acidic residues; sequence DRREEERETA. Low complexity predominate over residues 399–409; sequence SPSSTDSGASD. The stretch at 429–481 forms a coiled coil; the sequence is RKAEEAVNEVKRQAMSEVQKAVSEAEQKAFEMIASERARMEQTIVDAKRRAAE. Zn(2+) contacts are provided by cysteine 497, cysteine 500, cysteine 508, cysteine 511, cysteine 517, cysteine 521, histidine 529, and cysteine 533. The MYND-type zinc finger occupies 497-533; that stretch reads CWNCGRKASETCSGCNIARYCGSFCQHKDWEKHHRIC. Positions 561–586 are disordered; the sequence is SPTLERSSSATSRSSTPASVTAVDGL. Residues 566-586 are compositionally biased toward low complexity; sequence RSSSATSRSSTPASVTAVDGL.

It is found in the nucleus. Its function is as follows. May act as a transcriptional corepressor. The sequence is that of Protein CBFA2T2 (cbfa2t2) from Xenopus laevis (African clawed frog).